Consider the following 492-residue polypeptide: Catalase isozyme 2 (492 aa).

Residues M1–M32 are disordered. Positions P8–M32 are enriched in polar residues. Catalysis depends on residues H65 and N138. Residue Y348 coordinates heme.

This sequence belongs to the catalase family. Homotetramer. Heme is required as a cofactor. As to expression, abundant in hypocotyls and roots. Low levels are seen in the endosperms and cotyledons.

The protein localises to the peroxisome. The protein resides in the glyoxysome. It catalyses the reaction 2 H2O2 = O2 + 2 H2O. In terms of biological role, occurs in almost all aerobically respiring organisms and serves to protect cells from the toxic effects of hydrogen peroxide. This is Catalase isozyme 2 (CAT2) from Ricinus communis (Castor bean).